Consider the following 609-residue polypeptide: X-ray repair cross-complementing protein 6 (609 aa).

The segment at 1 to 28 (MSGWESYYKTEGDEEAEEEQEENLEASG) is disordered. Ser-2 is subject to N-acetylserine. Phosphoserine is present on Ser-2. Ser-6 bears the Phosphoserine; by PRKDC mark. Positions 12–24 (GDEEAEEEQEENL) are enriched in acidic residues. Phosphoserine is present on Ser-27. The active-site Schiff-base intermediate with DNA; for 5'-deoxyribose-5-phosphate lyase activity is Lys-31. Lys-31 is modified (N6-acetyllysine). Ser-51 carries the phosphoserine; by PRKDC modification. The 208-residue stretch at 261 to 468 (LKLNKDIVIS…VGKMKAIVEK (208 aa)) folds into the Ku domain. The tract at residues 277–341 (VQKALKPPPI…EETEELKRFD (65 aa)) is DNA-binding. Lys-287 is covalently cross-linked (Glycyl lysine isopeptide (Lys-Gly) (interchain with G-Cter in SUMO2)). Position 306 is a phosphoserine (Ser-306). Lys-317, Lys-331, and Lys-338 each carry N6-acetyllysine. Lys-317 participates in a covalent cross-link: Glycyl lysine isopeptide (Lys-Gly) (interchain with G-Cter in SUMO2). Residues 373–482 (SLVIGSSTLF…YRSDSFENPV (110 aa)) form an interaction with XRCC5 region. Residue Thr-455 is modified to Phosphothreonine. Lys-461 carries the post-translational modification N6-acetyllysine. Phosphoserine occurs at positions 477 and 520. The interval 536–562 (PEGKVTKRKHDNEGSGSKRPKVEYSEE) is disordered. 3 positions are modified to N6-acetyllysine: Lys-539, Lys-542, and Lys-544. The residue at position 550 (Ser-550) is a Phosphoserine. The tract at residues 550–609 (SGSKRPKVEYSEEELKTHISKGTLGKFTVPMLKEACRAYGLKSGLKKQELLEALTKHFQD) is interaction with DEAF1. An N6-acetyllysine mark is found at Lys-553 and Lys-556. Lys-556 is covalently cross-linked (Glycyl lysine isopeptide (Lys-Gly) (interchain with G-Cter in SUMO2)). Ser-560 carries the post-translational modification Phosphoserine. Lys-570 carries the N6,N6,N6-trimethyllysine modification. In terms of domain architecture, SAP spans 573-607 (LGKFTVPMLKEACRAYGLKSGLKKQELLEALTKHF). Residues 578–583 (VPMLKE) form an interaction with BAX region.

Belongs to the ku70 family. Forms a heterodimer with XRCC5/Ku80; heterodimerization stabilizes XRCC5 protein. Component of the core long-range non-homologous end joining (NHEJ) complex (also named DNA-PK complex) composed of PRKDC, LIG4, XRCC4, XRCC6/Ku70, XRCC5/Ku86 and NHEJ1/XLF. Additional component of the NHEJ complex includes PAXX. Following autophosphorylation, PRKDC dissociates from DNA, leading to formation of the short-range NHEJ complex, composed of LIG4, XRCC4, XRCC6/Ku70, XRCC5/Ku86 and NHEJ1/XLF. The XRCC5-XRCC6 dimer also associates with NAA15, and this complex binds to the osteocalcin promoter and activates osteocalcin expression. In addition, XRCC6 interacts with the osteoblast-specific transcription factors MSX2, RUNX2 and DLX5. Interacts with ELF3. Interacts with ATP23. The XRCC5-XRRC6 dimer associates in a DNA-dependent manner with APEX1. Binds to CDK9 isoform 2. Identified in a complex with DEAF1 and XRCC5. Interacts with DEAF1 (via the SAND domain); the interaction is direct and may be inhibited by DNA-binding. Interacts with CLU. Interacts with NR4A3; the DNA-dependent protein kinase complex DNA-PK phosphorylates and activates NR4A3 and prevents NR4A3 ubiquitinylation and degradation. Interacts with CYREN isoform 1 (CYREN-1) and isoform 4 (CYREN-2) (via KBM motif). Interacts (via N-terminus) with HSF1 (via N-terminus); this interaction is direct and prevents XRCC5/XRCC6 heterodimeric binding and non-homologous end joining (NHEJ) repair activities induced by ionizing radiation (IR). Part of the HDP-RNP complex composed of at least HEXIM1, PRKDC, XRCC5, XRCC6, paraspeckle proteins (SFPQ, NONO, PSPC1, RBM14, and MATR3) and NEAT1 RNA. Interacts with HMBOX1. Interacts with ATF7. Interacts with APLF (via KBM motif). Interacts with WRN (via KBM motif). The XRCC5-XRCC6 dimer associates with ALKBH2. Interacts with TPRN; TPRN interacts with a number of DNA damage response proteins, is recruited to sites of DNA damage and may play a role in DNA damage repair. When not acetylated, interacts with BAX. Interacts with ERCC6L2. As to quaternary structure, (Microbial infection) Interacts with human T-cell leukemia virus 1/HTLV-1 protein HBZ. In terms of processing, phosphorylation by PRKDC may enhance helicase activity. Phosphorylation of Ser-51 does not affect DNA repair. ADP-ribosylated by PARP3. Post-translationally, methylation by SETD4 leads to accumulation in the cytoplasm and is a prerequisite for acetylation, possibly due to the change of subcellular from the nucleus to the cytosol initiated by methylation, acetylation occurring in the cytosol. In terms of processing, acetylation can be catalyzed in vitro by CREBBP/CBP and KAT2B/PCAF.

The protein resides in the nucleus. The protein localises to the chromosome. Its subcellular location is the cytoplasm. Its function is as follows. Single-stranded DNA-dependent ATP-dependent helicase that plays a key role in DNA non-homologous end joining (NHEJ) by recruiting DNA-PK to DNA. Required for double-strand break repair and V(D)J recombination. Also has a role in chromosome translocation. Has a role in chromosome translocation. The DNA helicase II complex binds preferentially to fork-like ends of double-stranded DNA in a cell cycle-dependent manner. It works in the 3'-5' direction. During NHEJ, the XRCC5-XRRC6 dimer performs the recognition step: it recognizes and binds to the broken ends of the DNA and protects them from further resection. Binding to DNA may be mediated by XRCC6. The XRCC5-XRRC6 dimer acts as a regulatory subunit of the DNA-dependent protein kinase complex DNA-PK by increasing the affinity of the catalytic subunit PRKDC to DNA by 100-fold. The XRCC5-XRRC6 dimer is probably involved in stabilizing broken DNA ends and bringing them together. The assembly of the DNA-PK complex to DNA ends is required for the NHEJ ligation step. Probably also acts as a 5'-deoxyribose-5-phosphate lyase (5'-dRP lyase), by catalyzing the beta-elimination of the 5' deoxyribose-5-phosphate at an abasic site near double-strand breaks. 5'-dRP lyase activity allows to 'clean' the termini of abasic sites, a class of nucleotide damage commonly associated with strand breaks, before such broken ends can be joined. The XRCC5-XRRC6 dimer together with APEX1 acts as a negative regulator of transcription. In association with NAA15, the XRCC5-XRRC6 dimer binds to the osteocalcin promoter and activates osteocalcin expression. Plays a role in the regulation of DNA virus-mediated innate immune response by assembling into the HDP-RNP complex, a complex that serves as a platform for IRF3 phosphorylation and subsequent innate immune response activation through the cGAS-STING pathway. Negatively regulates apoptosis by interacting with BAX and sequestering it from the mitochondria. Might have deubiquitination activity, acting on BAX. This chain is X-ray repair cross-complementing protein 6 (XRCC6), found in Homo sapiens (Human).